A 282-amino-acid chain; its full sequence is Sulfur carrier protein FdhD (282 aa).

C115 serves as the catalytic Cysteine persulfide intermediate.

It belongs to the FdhD family.

The protein resides in the cytoplasm. Its function is as follows. Required for formate dehydrogenase (FDH) activity. Acts as a sulfur carrier protein that transfers sulfur from IscS to the molybdenum cofactor prior to its insertion into FDH. The sequence is that of Sulfur carrier protein FdhD from Streptomyces avermitilis (strain ATCC 31267 / DSM 46492 / JCM 5070 / NBRC 14893 / NCIMB 12804 / NRRL 8165 / MA-4680).